We begin with the raw amino-acid sequence, 197 residues long: MFEYLNGKLVKISPTNIVIDVAGIGYLISVANPYAWSALMNTEVKIYVHQVIREDAHSLYGFVNEAEKALFLRLISVSGIGPKSALAIIAAADNEGLITAIDNSDIKYLTKFPGVGKKTAMQMVLDLAGKFDATGTVGISLLDAGPAGNLALEEAIEALQALGYKATELKKIEKKLAQETGLTSEEYIKSALKLMMK.

Residues 1 to 63 (MFEYLNGKLV…EDAHSLYGFV (63 aa)) form a domain I region. The domain II stretch occupies residues 64 to 142 (NEAEKALFLR…ATGTVGISLL (79 aa)). Residues 142-146 (LDAGP) form a flexible linker region. The domain III stretch occupies residues 147–197 (AGNLALEEAIEALQALGYKATELKKIEKKLAQETGLTSEEYIKSALKLMMK).

It belongs to the RuvA family. Homotetramer. Forms an RuvA(8)-RuvB(12)-Holliday junction (HJ) complex. HJ DNA is sandwiched between 2 RuvA tetramers; dsDNA enters through RuvA and exits via RuvB. An RuvB hexamer assembles on each DNA strand where it exits the tetramer. Each RuvB hexamer is contacted by two RuvA subunits (via domain III) on 2 adjacent RuvB subunits; this complex drives branch migration. In the full resolvosome a probable DNA-RuvA(4)-RuvB(12)-RuvC(2) complex forms which resolves the HJ.

The protein resides in the cytoplasm. Functionally, the RuvA-RuvB-RuvC complex processes Holliday junction (HJ) DNA during genetic recombination and DNA repair, while the RuvA-RuvB complex plays an important role in the rescue of blocked DNA replication forks via replication fork reversal (RFR). RuvA specifically binds to HJ cruciform DNA, conferring on it an open structure. The RuvB hexamer acts as an ATP-dependent pump, pulling dsDNA into and through the RuvAB complex. HJ branch migration allows RuvC to scan DNA until it finds its consensus sequence, where it cleaves and resolves the cruciform DNA. The protein is Holliday junction branch migration complex subunit RuvA of Lactococcus lactis subsp. lactis (strain IL1403) (Streptococcus lactis).